The chain runs to 461 residues: Serine carboxypeptidase-like 51 (461 aa).

Residues 1-20 (MKTTVVYLVILCLIVSCTNG) form the signal peptide. 2 N-linked (GlcNAc...) asparagine glycosylation sites follow: N99 and N152. The active site involves S166. An N-linked (GlcNAc...) asparagine glycan is attached at N340. Active-site residues include D379 and H438.

This sequence belongs to the peptidase S10 family. As to expression, expressed in seedlings, roots, flowers and siliques.

Its subcellular location is the secreted. Its function is as follows. Probable carboxypeptidase. This chain is Serine carboxypeptidase-like 51 (SCPL51), found in Arabidopsis thaliana (Mouse-ear cress).